Consider the following 143-residue polypeptide: MIINVFYKTKVPSHFRKTSLFKAGVSAALGKFASKKGEVNLIFVDGKEIHKINKEFLNHDYKTDVISFNYPFPQKGGEGLPFGDIFVCYDVAKENASLYGQGVLKEMLTYAVHGALHLAGMDDATPKERSAMDDETGRIILKI.

Residues H113, H117, and D123 each contribute to the Zn(2+) site.

Belongs to the endoribonuclease YbeY family. It depends on Zn(2+) as a cofactor.

The protein resides in the cytoplasm. Functionally, single strand-specific metallo-endoribonuclease involved in late-stage 70S ribosome quality control and in maturation of the 3' terminus of the 16S rRNA. The protein is Endoribonuclease YbeY of Elusimicrobium minutum (strain Pei191).